A 166-amino-acid polypeptide reads, in one-letter code: Interferon gamma (166 aa).

Residues Met-1–Gly-23 form the signal peptide. Gln-24 carries the pyrrolidone carboxylic acid modification. N-linked (GlcNAc...) asparagine glycans are attached at residues Asn-39 and Asn-106.

This sequence belongs to the type II (or gamma) interferon family. As to quaternary structure, homodimer. Interacts with IFNGR1 (via extracellular domain); this interaction promotes IFNGR1 dimerization. Released primarily from activated T lymphocytes.

Its subcellular location is the secreted. Functionally, type II interferon produced by immune cells such as T-cells and NK cells that plays crucial roles in antimicrobial, antiviral, and antitumor responses by activating effector immune cells and enhancing antigen presentation. Primarily signals through the JAK-STAT pathway after interaction with its receptor IFNGR1 to affect gene regulation. Upon IFNG binding, IFNGR1 intracellular domain opens out to allow association of downstream signaling components JAK2, JAK1 and STAT1, leading to STAT1 activation, nuclear translocation and transcription of IFNG-regulated genes. Many of the induced genes are transcription factors such as IRF1 that are able to further drive regulation of a next wave of transcription. Plays a role in class I antigen presentation pathway by inducing a replacement of catalytic proteasome subunits with immunoproteasome subunits. In turn, increases the quantity, quality, and repertoire of peptides for class I MHC loading. Increases the efficiency of peptide generation also by inducing the expression of activator PA28 that associates with the proteasome and alters its proteolytic cleavage preference. Up-regulates as well MHC II complexes on the cell surface by promoting expression of several key molecules such as cathepsins B/CTSB, H/CTSH, and L/CTSL. Participates in the regulation of hematopoietic stem cells during development and under homeostatic conditions by affecting their development, quiescence, and differentiation. This is Interferon gamma (IFNG) from Moschus berezovskii (Chinese forest musk deer).